Consider the following 473-residue polypeptide: Probable serine/threonine-protein kinase glkA (473 aa).

A disordered region spans residues 1-84 (MTIPTDNNSS…QSSSTATVNS (84 aa)). Residues 7-84 (NNSSNNKGYN…QSSSTATVNS (78 aa)) show a composition bias toward low complexity. One can recognise a Protein kinase domain in the interval 91–366 (YEIIKQVGQG…IDEIIAHPFL (276 aa)). ATP-binding positions include 97 to 105 (VGQGTFGKV) and K119. D208 functions as the Proton acceptor in the catalytic mechanism. 2 disordered regions span residues 389–418 (GKSS…SNNK) and 437–473 (SSNL…TNTI). The segment covering 442–466 (SIDNSNNGKSSSSSNNIPSLNNSNN) has biased composition (low complexity).

The protein belongs to the protein kinase superfamily. CMGC Ser/Thr protein kinase family. GSK-3 subfamily.

It carries out the reaction L-seryl-[tau protein] + ATP = O-phospho-L-seryl-[tau protein] + ADP + H(+). The catalysed reaction is L-threonyl-[tau protein] + ATP = O-phospho-L-threonyl-[tau protein] + ADP + H(+). The polypeptide is Probable serine/threonine-protein kinase glkA (glkA) (Dictyostelium discoideum (Social amoeba)).